We begin with the raw amino-acid sequence, 138 residues long: Venom allergen 2 (138 aa).

Positions 1–19 (MKSFVLATCLLGFAQIIYA) are cleaved as a signal peptide. Cystine bridges form between Cys-34-Cys-57, Cys-81-Cys-94, and Cys-101-Cys-122.

Belongs to the ant venom allergen 2/4 family. As to quaternary structure, homodimer; disulfide-linked. Expressed by the venom gland.

It is found in the secreted. This is Venom allergen 2 from Solenopsis invicta (Red imported fire ant).